Here is a 384-residue protein sequence, read N- to C-terminus: Succinyl-diaminopimelate desuccinylase (384 aa).

His71 contributes to the Zn(2+) binding site. Residue Asp73 is part of the active site. Asp104 lines the Zn(2+) pocket. Glu139 acts as the Proton acceptor in catalysis. The Zn(2+) site is built by Glu140, Glu168, and His357.

This sequence belongs to the peptidase M20A family. DapE subfamily. Homodimer. It depends on Zn(2+) as a cofactor. Co(2+) serves as cofactor.

It catalyses the reaction N-succinyl-(2S,6S)-2,6-diaminopimelate + H2O = (2S,6S)-2,6-diaminopimelate + succinate. It participates in amino-acid biosynthesis; L-lysine biosynthesis via DAP pathway; LL-2,6-diaminopimelate from (S)-tetrahydrodipicolinate (succinylase route): step 3/3. In terms of biological role, catalyzes the hydrolysis of N-succinyl-L,L-diaminopimelic acid (SDAP), forming succinate and LL-2,6-diaminopimelate (DAP), an intermediate involved in the bacterial biosynthesis of lysine and meso-diaminopimelic acid, an essential component of bacterial cell walls. The protein is Succinyl-diaminopimelate desuccinylase of Afipia carboxidovorans (strain ATCC 49405 / DSM 1227 / KCTC 32145 / OM5) (Oligotropha carboxidovorans).